A 383-amino-acid chain; its full sequence is Probable acyl-CoA dehydrogenase YdiO (383 aa).

The protein belongs to the acyl-CoA dehydrogenase family. FAD serves as cofactor.

It carries out the reaction a 2,3-saturated acyl-CoA + A = a 2,3-dehydroacyl-CoA + AH2. This chain is Probable acyl-CoA dehydrogenase YdiO (ydiO), found in Escherichia coli O157:H7.